Here is a 270-residue protein sequence, read N- to C-terminus: Putative postmeiotic segregation increased 2-like protein 11 (270 aa).

It belongs to the DNA mismatch repair MutL/HexB family.

This Homo sapiens (Human) protein is Putative postmeiotic segregation increased 2-like protein 11 (PMS2P11).